The sequence spans 336 residues: MMTLNLQTMSSNDMLNFGKKPAYTTSNGSMYIGDSLELLESFPDESISLVMTSPPFALQRKKEYGNLEQHEYVDWFLSFAKVVNKKLKPDGSFVVDFGGAYMKGVPARSIYNFRVLIRMIDEVGFFLAEDFYWFNPSKLPSPIEWVNKRKIRVKDAVNTVWWFSKTEWPKSDITKVLAPYSDRMKKLIEDPDKFYTPKTRPSGHDIGKSFSKDNGGSIPPNLLQISNSESNGQYLANCKLMGIKAHPARFPAKLPEFFIRMLTEPDDLVVDIFGGSNTTGLVAERESRKWISFEMKPEYVAASAFRFLDNNISEEKITDIYNRILNGESLDLNSII.

Tandem repeats lie at residues 11–113 (SNDM…IYNF) and 181–293 (SDRM…WISF). Positions 196-215 (TPKTRPSGHDIGKSFSKDNG) are disordered. Over residues 202–211 (SGHDIGKSFS) the composition is skewed to basic and acidic residues.

The protein belongs to the N(4)/N(6)-methyltransferase family. N(4) subfamily. Monomer.

The enzyme catalyses a 2'-deoxycytidine in DNA + S-adenosyl-L-methionine = an N(4)-methyl-2'-deoxycytidine in DNA + S-adenosyl-L-homocysteine + H(+). A beta subtype methylase, recognizes the double-stranded sequence 5'-CAGCTG-3', methylates C-4 on both strands, and protects the DNA from cleavage by the PvuII endonuclease. This Proteus hauseri protein is Type II methyltransferase M.PvuII.